The primary structure comprises 67 residues: DNA-directed RNA polymerase subunit omega (67 aa).

The protein belongs to the RNA polymerase subunit omega family. As to quaternary structure, the RNAP catalytic core consists of 2 alpha, 1 beta, 1 beta' and 1 omega subunit. When a sigma factor is associated with the core the holoenzyme is formed, which can initiate transcription.

The catalysed reaction is RNA(n) + a ribonucleoside 5'-triphosphate = RNA(n+1) + diphosphate. Its function is as follows. Promotes RNA polymerase assembly. Latches the N- and C-terminal regions of the beta' subunit thereby facilitating its interaction with the beta and alpha subunits. This is DNA-directed RNA polymerase subunit omega from Cupriavidus metallidurans (strain ATCC 43123 / DSM 2839 / NBRC 102507 / CH34) (Ralstonia metallidurans).